We begin with the raw amino-acid sequence, 248 residues long: Ribonuclease 3 (248 aa).

An RNase III domain is found at 6 to 136; the sequence is LAYLQTLIGS…LIGAIYLDKG (131 aa). A Mg(2+)-binding site is contributed by Glu-49. The active site involves Asp-53. Mg(2+)-binding residues include Asp-122 and Glu-125. Residue Glu-125 is part of the active site. A DRBM domain is found at 163–231; the sequence is NYKSCLIEYS…AKEAMERIIA (69 aa).

The protein belongs to the ribonuclease III family. As to quaternary structure, homodimer. Requires Mg(2+) as cofactor.

It is found in the cytoplasm. The catalysed reaction is Endonucleolytic cleavage to 5'-phosphomonoester.. Its function is as follows. Digests double-stranded RNA. Involved in the processing of primary rRNA transcript to yield the immediate precursors to the large and small rRNAs (23S and 16S). Processes some mRNAs, and tRNAs when they are encoded in the rRNA operon. Processes pre-crRNA and tracrRNA of type II CRISPR loci if present in the organism. This Chlorobium chlorochromatii (strain CaD3) protein is Ribonuclease 3.